The sequence spans 164 residues: Protein 4 (164 aa).

In Lettuce big-vein associated virus (isolate Japan/Kagawa) (LBVaV), this protein is Protein 4.